A 499-amino-acid polypeptide reads, in one-letter code: Lysine--tRNA ligase (499 aa).

Residues Glu408 and Glu415 each contribute to the Mg(2+) site.

The protein belongs to the class-II aminoacyl-tRNA synthetase family. As to quaternary structure, homodimer. Requires Mg(2+) as cofactor.

It is found in the cytoplasm. The enzyme catalyses tRNA(Lys) + L-lysine + ATP = L-lysyl-tRNA(Lys) + AMP + diphosphate. This chain is Lysine--tRNA ligase, found in Thermoanaerobacter pseudethanolicus (strain ATCC 33223 / 39E) (Clostridium thermohydrosulfuricum).